The sequence spans 344 residues: 3,4-dihydroxy-2-butanone 4-phosphate synthase (344 aa).

Positions 1–202 (MILKRVTEAL…VSDLISYRLE (202 aa)) are DHBP synthase. D-ribulose 5-phosphate is bound by residues 27 to 28 (RE), D32, 139 to 143 (RTGHT), and E163. Position 28 (E28) interacts with Mg(2+). H142 lines the Mg(2+) pocket. The segment at 203 to 344 (NESLLKMFCQ…GLKLVETISL (142 aa)) is GTP cyclohydrolase II-like.

It in the N-terminal section; belongs to the DHBP synthase family. In the C-terminal section; belongs to the GTP cyclohydrolase II family. Requires Mg(2+) as cofactor. The cofactor is Mn(2+).

The enzyme catalyses D-ribulose 5-phosphate = (2S)-2-hydroxy-3-oxobutyl phosphate + formate + H(+). Its pathway is cofactor biosynthesis; riboflavin biosynthesis; 2-hydroxy-3-oxobutyl phosphate from D-ribulose 5-phosphate: step 1/1. Catalyzes the conversion of D-ribulose 5-phosphate to formate and 3,4-dihydroxy-2-butanone 4-phosphate. This Helicobacter pylori (strain ATCC 700392 / 26695) (Campylobacter pylori) protein is 3,4-dihydroxy-2-butanone 4-phosphate synthase (ribB).